Here is a 379-residue protein sequence, read N- to C-terminus: MSLNTPDVIICKAAVVRELGRSVMVEEIKVDPPKATEVRIKMLFASICHTDMLCFDGFPTPLFPRIPGHEGVGMVESVGEDIKTKLKPGDIVMPLFMGECGQCLNCKSKRTNLCHAYPLTLSGLLLDGTSRMSIAKTEETIYHHLSCSTWSEYMVIDINYVLKIDPKMHLPYASFLSCGFTTGFGAPWKETQITKGSIVAVFGLGAVGLGAIKGAQMQGASIIIGVDINENKAAKGKAFGMTHFINPKDHPNQLVSDMVRDITDGLGVDYCFECTGIASLLKEIIEASKIGFGTTILIGAAPDNVPISSLSLINGRTLKGTTFGGVRTRSDLPIILQKCMNEEIELDELMSHEIRLENIHEIFEILKKPDCVKILINFD.

Position 48 (C48) interacts with Zn(2+). 49-53 contacts NAD(+); that stretch reads HTDML. 6 residues coordinate Zn(2+): H69, C100, C103, C106, C114, and C178. Residues 203–208, D227, K232, 275–277, 298–300, and 321–323 contribute to the NAD(+) site; these read GLGAVG, TGI, IGA, and TTF.

This sequence belongs to the zinc-containing alcohol dehydrogenase family. Class-IV subfamily. Homodimer. Zn(2+) serves as cofactor. Expressed in flowers and disk florets.

It carries out the reaction (R,R)-chrysanthemol + NAD(+) = (1R,3R)-chrysanthemal + NADH + H(+). The enzyme catalyses nerol + NAD(+) = neral + NADH + H(+). It catalyses the reaction (S)-(-)-citronellol + NAD(+) = (S)-(-)-citronellal + NADH + H(+). The catalysed reaction is perillyl alcohol + NAD(+) = perillyl aldehyde + NADH + H(+). It carries out the reaction (6E)-8-hydroxygeraniol + NAD(+) = (6E)-8-hydroxygeranial + NADH + H(+). The enzyme catalyses (2E)-geraniol + NAD(+) = (2E)-geranial + NADH + H(+). It functions in the pathway isoprenoid biosynthesis. Functionally, component of the monoterpenoid pyrethrins biosynthesis; pyrethrins are widely used plant-derived pesticide. Mediates the conversion of trans-chrysanthemol into trans-chrysanthemal. This Tanacetum cinerariifolium (Dalmatian daisy) protein is Alcohol dehydrogenase 2.